Here is a 343-residue protein sequence, read N- to C-terminus: UDP-3-O-acylglucosamine N-acyltransferase 2 (343 aa).

Catalysis depends on His-251, which acts as the Proton acceptor.

Belongs to the transferase hexapeptide repeat family. LpxD subfamily. As to quaternary structure, homotrimer.

The catalysed reaction is a UDP-3-O-[(3R)-3-hydroxyacyl]-alpha-D-glucosamine + a (3R)-hydroxyacyl-[ACP] = a UDP-2-N,3-O-bis[(3R)-3-hydroxyacyl]-alpha-D-glucosamine + holo-[ACP] + H(+). It functions in the pathway bacterial outer membrane biogenesis; LPS lipid A biosynthesis. Functionally, catalyzes the N-acylation of UDP-3-O-acylglucosamine using 3-hydroxyacyl-ACP as the acyl donor. Is involved in the biosynthesis of lipid A, a phosphorylated glycolipid that anchors the lipopolysaccharide to the outer membrane of the cell. The polypeptide is UDP-3-O-acylglucosamine N-acyltransferase 2 (Legionella pneumophila (strain Paris)).